The primary structure comprises 348 residues: Protein RecA (348 aa).

Position 67–74 (67–74 (GPESSGKT)) interacts with ATP.

This sequence belongs to the RecA family.

The protein resides in the cytoplasm. Its function is as follows. Can catalyze the hydrolysis of ATP in the presence of single-stranded DNA, the ATP-dependent uptake of single-stranded DNA by duplex DNA, and the ATP-dependent hybridization of homologous single-stranded DNAs. It interacts with LexA causing its activation and leading to its autocatalytic cleavage. The protein is Protein RecA of Amycolatopsis mediterranei (strain U-32).